The sequence spans 329 residues: NADH-quinone oxidoreductase subunit H (329 aa).

The next 9 membrane-spanning stretches (helical) occupy residues 9-29 (LIKI…ATYI), 42-62 (GPSY…IKLF), 75-95 (LIFT…MAPI), 117-137 (IGFL…ILAG), 154-174 (IQLL…LMVV), 188-208 (GGFL…FLIA), 238-258 (LKWG…SFVI), 269-291 (WGFI…LSMW), and 309-329 (WKIM…IILI).

Belongs to the complex I subunit 1 family. NDH-1 is composed of 14 different subunits. Subunits NuoA, H, J, K, L, M, N constitute the membrane sector of the complex.

The protein resides in the cell inner membrane. It carries out the reaction a quinone + NADH + 5 H(+)(in) = a quinol + NAD(+) + 4 H(+)(out). Functionally, NDH-1 shuttles electrons from NADH, via FMN and iron-sulfur (Fe-S) centers, to quinones in the respiratory chain. The immediate electron acceptor for the enzyme in this species is believed to be ubiquinone. Couples the redox reaction to proton translocation (for every two electrons transferred, four hydrogen ions are translocated across the cytoplasmic membrane), and thus conserves the redox energy in a proton gradient. This subunit may bind ubiquinone. The chain is NADH-quinone oxidoreductase subunit H from Helicobacter acinonychis (strain Sheeba).